A 468-amino-acid chain; its full sequence is Putative proline/betaine transporter (468 aa).

12 consecutive transmembrane segments (helical) span residues 20-42 (VFAT…YTTA), 63-83 (FAAL…FGII), 91-111 (VVLT…GVLP), 115-135 (MIGL…GFST), 164-184 (IGTL…SFFL), 191-211 (AWGW…GLYL), 246-266 (ILVC…VTAY), 284-304 (VLIT…GKLA), 312-332 (VFLI…SLLN), 336-356 (LPFI…YEAT), 376-396 (VTFN…NSWL), and 403-423 (IYAP…VIAV).

It belongs to the major facilitator superfamily. Metabolite:H+ Symporter (MHS) family (TC 2.A.1.6) family.

It is found in the cell membrane. Its function is as follows. May be a proton symporter involved in the uptake of osmolytes such as proline and glycine betaine. This Staphylococcus haemolyticus (strain JCSC1435) protein is Putative proline/betaine transporter (proP).